The sequence spans 430 residues: Serine hydroxymethyltransferase (430 aa).

(6S)-5,6,7,8-tetrahydrofolate contacts are provided by residues L123 and 127–129; that span reads GHL. K232 bears the N6-(pyridoxal phosphate)lysine mark. Position 248 (E248) interacts with (6S)-5,6,7,8-tetrahydrofolate.

This sequence belongs to the SHMT family. Homodimer. Pyridoxal 5'-phosphate is required as a cofactor.

It is found in the cytoplasm. It carries out the reaction (6R)-5,10-methylene-5,6,7,8-tetrahydrofolate + glycine + H2O = (6S)-5,6,7,8-tetrahydrofolate + L-serine. The protein operates within one-carbon metabolism; tetrahydrofolate interconversion. It functions in the pathway amino-acid biosynthesis; glycine biosynthesis; glycine from L-serine: step 1/1. Functionally, catalyzes the reversible interconversion of serine and glycine with tetrahydrofolate (THF) serving as the one-carbon carrier. This reaction serves as the major source of one-carbon groups required for the biosynthesis of purines, thymidylate, methionine, and other important biomolecules. Also exhibits THF-independent aldolase activity toward beta-hydroxyamino acids, producing glycine and aldehydes, via a retro-aldol mechanism. In Anaplasma marginale (strain St. Maries), this protein is Serine hydroxymethyltransferase.